The chain runs to 472 residues: Carboxypeptidase Q (472 aa).

The N-terminal stretch at 1 to 20 (MRFLFFLFVAVVHLFSLGSG) is a signal peptide. The propeptide occupies 21-44 (KAIYKSGVSQRTFQEIKEEIANYE). An N-linked (GlcNAc...) asparagine glycan is attached at Asn-61. Residues His-290 and Asp-302 each coordinate Zn(2+). Glu-336 (nucleophile) is an active-site residue. Glu-337 serves as a coordination point for Zn(2+). N-linked (GlcNAc...) asparagine glycosylation occurs at Asn-353. Asp-364 provides a ligand contact to Zn(2+). Asn-396 carries an N-linked (GlcNAc...) asparagine glycan. His-434 is a Zn(2+) binding site.

This sequence belongs to the peptidase M28 family. As to quaternary structure, homodimer. The monomeric form is inactive while the homodimer is active. Post-translationally, N-glycosylated. The secreted form is modified by hybrid or complex type oligosaccharide chains.

It is found in the endoplasmic reticulum. It localises to the golgi apparatus. The protein localises to the lysosome. Its subcellular location is the secreted. Functionally, carboxypeptidase that may play an important role in the hydrolysis of circulating peptides. Catalyzes the hydrolysis of dipeptides with unsubstituted terminals into amino acids. May play a role in the liberation of thyroxine hormone from its thyroglobulin (Tg) precursor. In Rattus norvegicus (Rat), this protein is Carboxypeptidase Q (Cpq).